The sequence spans 474 residues: tRNA-2-methylthio-N(6)-dimethylallyladenosine synthase (474 aa).

Residues 3-120 (KKLHIKTWGC…LPEMINSVRG (118 aa)) enclose the MTTase N-terminal domain. Residues cysteine 12, cysteine 49, cysteine 83, cysteine 157, cysteine 161, and cysteine 164 each contribute to the [4Fe-4S] cluster site. The 233-residue stretch at 143–375 (RAEGPTAFVS…QERINQQAMA (233 aa)) folds into the Radical SAM core domain. Residues 378 to 441 (RRMLGTTQRI…PNSLRGKVVR (64 aa)) form the TRAM domain.

This sequence belongs to the methylthiotransferase family. MiaB subfamily. As to quaternary structure, monomer. It depends on [4Fe-4S] cluster as a cofactor.

The protein localises to the cytoplasm. It carries out the reaction N(6)-dimethylallyladenosine(37) in tRNA + (sulfur carrier)-SH + AH2 + 2 S-adenosyl-L-methionine = 2-methylsulfanyl-N(6)-dimethylallyladenosine(37) in tRNA + (sulfur carrier)-H + 5'-deoxyadenosine + L-methionine + A + S-adenosyl-L-homocysteine + 2 H(+). It catalyses the reaction N(6)-dimethylallyladenosine(37) in tRNA + (sulfur carrier)-SH + AH2 + S-adenosyl-L-methionine = 2-thio-N(6)-dimethylallyladenosine(37) in tRNA + (sulfur carrier)-H + 5'-deoxyadenosine + L-methionine + A + H(+). The catalysed reaction is 2-thio-N(6)-dimethylallyladenosine(37) in tRNA + S-adenosyl-L-methionine = 2-methylsulfanyl-N(6)-dimethylallyladenosine(37) in tRNA + S-adenosyl-L-homocysteine + H(+). In terms of biological role, catalyzes the methylthiolation of N6-(dimethylallyl)adenosine (i(6)A), leading to the formation of 2-methylthio-N6-(dimethylallyl)adenosine (ms(2)i(6)A) at position 37 in tRNAs that read codons beginning with uridine. This chain is tRNA-2-methylthio-N(6)-dimethylallyladenosine synthase, found in Salmonella typhimurium (strain LT2 / SGSC1412 / ATCC 700720).